A 379-amino-acid chain; its full sequence is Cell division protein FtsZ (379 aa).

GTP-binding positions include 18-22 (GGGVN), 105-107 (GTG), glutamate 136, arginine 140, and aspartate 184.

This sequence belongs to the FtsZ family. Homodimer. Polymerizes to form a dynamic ring structure in a strictly GTP-dependent manner. Interacts directly with several other division proteins.

Its subcellular location is the cytoplasm. In terms of biological role, essential cell division protein that forms a contractile ring structure (Z ring) at the future cell division site. The regulation of the ring assembly controls the timing and the location of cell division. One of the functions of the FtsZ ring is to recruit other cell division proteins to the septum to produce a new cell wall between the dividing cells. Binds GTP and shows GTPase activity. The chain is Cell division protein FtsZ from Mycobacterium leprae (strain TN).